The chain runs to 340 residues: Phosphoribosylformylglycinamidine cyclo-ligase (340 aa).

The protein belongs to the AIR synthase family.

It localises to the cytoplasm. It carries out the reaction 2-formamido-N(1)-(5-O-phospho-beta-D-ribosyl)acetamidine + ATP = 5-amino-1-(5-phospho-beta-D-ribosyl)imidazole + ADP + phosphate + H(+). It participates in purine metabolism; IMP biosynthesis via de novo pathway; 5-amino-1-(5-phospho-D-ribosyl)imidazole from N(2)-formyl-N(1)-(5-phospho-D-ribosyl)glycinamide: step 2/2. In Streptococcus uberis (strain ATCC BAA-854 / 0140J), this protein is Phosphoribosylformylglycinamidine cyclo-ligase.